The chain runs to 355 residues: MAEFVRAQIFGTTFEITSRYTDLQPVGMGAFGLVCSAKDQLTSQAVAIKKIMKPFSTPVLSKRTYRELKLLKHLRHENIISLSDIFISPLEDIYFVTELLGTDLHRLLTSRPLEKQFIQYFLYQILRGLKYVHSAGVVHRDLKPSNILVNENCDLKICDFGLARIQDPQMTGYVSTRYYRAPEIMLTWQKYDVEVDIWSAGCIFAEMLEGKPLFPGKDHVNQFSIITELLGTPPDDVIQTICSENTLRFVQSLPKRERQPLSNKFKNAEPQAVDLLENMLVFDPKKRVRAEQALAHPYLAPYHDPTDEPIAEEKFDWSFNDADLPVDTWKIMMYSEILDYHNVDAAAQEQENNGS.

The Protein kinase domain occupies 20–299 (YTDLQPVGMG…AEQALAHPYL (280 aa)). ATP-binding positions include 26–34 (VGMGAFGLV) and lysine 49. Aspartate 141 (proton acceptor) is an active-site residue. A Phosphothreonine modification is found at threonine 171. Residues 171–173 (TGY) carry the TXY motif. At tyrosine 173 the chain carries Phosphotyrosine.

This sequence belongs to the protein kinase superfamily. Ser/Thr protein kinase family. MAP kinase subfamily. HOG1 sub-subfamily. Requires Mg(2+) as cofactor. In terms of processing, dually phosphorylated on Thr-171 and Tyr-173, which activates the enzyme.

It is found in the cytoplasm. The protein localises to the nucleus. The enzyme catalyses L-seryl-[protein] + ATP = O-phospho-L-seryl-[protein] + ADP + H(+). It catalyses the reaction L-threonyl-[protein] + ATP = O-phospho-L-threonyl-[protein] + ADP + H(+). Its activity is regulated as follows. Activated by tyrosine and threonine phosphorylation. Proline-directed serine/threonine-protein kinase involved in a signal transduction pathway that is activated by changes in the osmolarity of the extracellular environment. Controls osmotic regulation of transcription of target genes. This chain is Mitogen-activated protein kinase HOG1 (HOG1), found in Alternaria brassicicola (Dark leaf spot agent).